Here is a 659-residue protein sequence, read N- to C-terminus: ATP-binding cassette sub-family D member 3 (659 aa).

The tract at residues 1–61 (MAAFSKYLTA…GKKERAVVDK (61 aa)) is interaction with PEX19. An N-linked (GlcNAc...) asparagine glycan is attached at Asn12. Position 61 is an N6-acetyllysine (Lys61). Residues 84–104 (GYLVLIAVMLVSRTYCDVWMI) form a helical membrane-spanning segment. The ABC transmembrane type-1 domain maps to 85–372 (YLVLIAVMLV…MLLRMSQALG (288 aa)). Residue Asn106 is glycosylated (N-linked (GlcNAc...) asparagine). The helical transmembrane segment at 126-146 (LLNFIAAMPLISLVNNFLKYG) threads the bilayer. Asn206 carries an N-linked (GlcNAc...) asparagine glycan. The helical transmembrane segment at 224–244 (AIGAQGPASMMAYLVVSGLFL) threads the bilayer. Lys260 carries the post-translational modification N6-acetyllysine. Residues 313-333 (MGFIDSIIAKYLATVVGYLVV) traverse the membrane as a helical segment. Position 399 is an N6-acetyllysine (Lys399). An ABC transporter domain is found at 440 to 659 (IKFDHVPLAT…ITEDTVEFGS (220 aa)). An ATP-binding site is contributed by 473-480 (GPNGCGKS). Residue Lys533 is modified to N6-acetyllysine. Ser659 carries the phosphoserine modification.

It belongs to the ABC transporter superfamily. ABCD family. Peroxisomal fatty acyl CoA transporter (TC 3.A.1.203) subfamily. In terms of assembly, homodimers. Can form heterodimers with ABCD1 and ABCD2. Dimerization is necessary to form an active transporter. Interacts with PEX19; mediates the targeting of ABCD3 to peroxisomes. Post-translationally, ubiquitinated by PEX2 during pexophagy in response to starvation, leading to its degradation.

It localises to the peroxisome membrane. The enzyme catalyses a very long-chain fatty acyl-CoA + H2O = a very long-chain fatty acid + CoA + H(+). It catalyses the reaction a very long-chain fatty acid(in) + ATP + H2O = a very long-chain fatty acid(out) + ADP + phosphate + H(+). It carries out the reaction a long-chain fatty acyl-CoA + H2O = a long-chain fatty acid + CoA + H(+). The catalysed reaction is a long-chain fatty acid(in) + ATP + H2O = a long-chain fatty acid(out) + ADP + phosphate + H(+). The enzyme catalyses pristanoyl-CoA + H2O = 2,6,10,14-tetramethylpentadecanoate + CoA + H(+). It catalyses the reaction 2,6,10,14-tetramethylpentadecanoate(in) + ATP + H2O = 2,6,10,14-tetramethylpentadecanoate(out) + ADP + phosphate + H(+). It carries out the reaction hexadecanedioyl-CoA + H2O = hexadecanedioate + CoA + H(+). The catalysed reaction is hexadecanedioate(in) + ATP + H2O = hexadecanedioate(out) + ADP + phosphate + H(+). The enzyme catalyses (5Z,8Z,11Z,14Z,17Z)-eicosapentaenoyl-CoA + H2O = (5Z,8Z,11Z,14Z,17Z)-eicosapentaenoate + CoA + H(+). It catalyses the reaction (5Z,8Z,11Z,14Z,17Z)-eicosapentaenoate(in) + ATP + H2O = (5Z,8Z,11Z,14Z,17Z)-eicosapentaenoate(out) + ADP + phosphate + H(+). It carries out the reaction (4Z,7Z,10Z,13Z,16Z,19Z)-docosahexaenoyl-CoA + H2O = (4Z,7Z,10Z,13Z,16Z,19Z)-docosahexaenoate + CoA + H(+). The catalysed reaction is (4Z,7Z,10Z,13Z,16Z,19Z)-docosahexaenoate(in) + ATP + H2O = (4Z,7Z,10Z,13Z,16Z,19Z)-docosahexaenoate(out) + ADP + phosphate + H(+). In terms of biological role, broad substrate specificity ATP-dependent transporter of the ATP-binding cassette (ABC) family that catalyzes the transport of long-chain fatty acids (LCFA)-CoA, dicarboxylic acids-CoA, long-branched-chain fatty acids-CoA and bile acids from the cytosol to the peroxisome lumen for beta-oxydation. Has fatty acyl-CoA thioesterase and ATPase activities. Probably hydrolyzes fatty acyl-CoAs into free fatty acids prior to their ATP-dependent transport into peroxisomes. Thus, play a role in regulation of LCFAs and energy metabolism namely, in the degradation and biosynthesis of fatty acids by beta-oxidation. The protein is ATP-binding cassette sub-family D member 3 of Homo sapiens (Human).